The chain runs to 349 residues: Protein RecA (349 aa).

Residue 65 to 72 (GPESSGKT) participates in ATP binding.

It belongs to the RecA family.

Its subcellular location is the cytoplasm. In terms of biological role, can catalyze the hydrolysis of ATP in the presence of single-stranded DNA, the ATP-dependent uptake of single-stranded DNA by duplex DNA, and the ATP-dependent hybridization of homologous single-stranded DNAs. It interacts with LexA causing its activation and leading to its autocatalytic cleavage. In Vibrio vulnificus (strain CMCP6), this protein is Protein RecA.